The chain runs to 318 residues: Methionyl-tRNA formyltransferase (318 aa).

Residue 112-115 participates in (6S)-5,6,7,8-tetrahydrofolate binding; the sequence is SILP.

Belongs to the Fmt family.

It carries out the reaction L-methionyl-tRNA(fMet) + (6R)-10-formyltetrahydrofolate = N-formyl-L-methionyl-tRNA(fMet) + (6S)-5,6,7,8-tetrahydrofolate + H(+). Functionally, attaches a formyl group to the free amino group of methionyl-tRNA(fMet). The formyl group appears to play a dual role in the initiator identity of N-formylmethionyl-tRNA by promoting its recognition by IF2 and preventing the misappropriation of this tRNA by the elongation apparatus. The protein is Methionyl-tRNA formyltransferase of Haemophilus influenzae (strain ATCC 51907 / DSM 11121 / KW20 / Rd).